The chain runs to 579 residues: Arginine--tRNA ligase (579 aa).

The 'HIGH' region motif lies at 123–133 (PNLAKEMHVGH).

Belongs to the class-I aminoacyl-tRNA synthetase family. Monomer.

It is found in the cytoplasm. The enzyme catalyses tRNA(Arg) + L-arginine + ATP = L-arginyl-tRNA(Arg) + AMP + diphosphate. The chain is Arginine--tRNA ligase from Saccharophagus degradans (strain 2-40 / ATCC 43961 / DSM 17024).